The primary structure comprises 660 residues: PAN2-PAN3 deadenylation complex subunit PAN3 (660 aa).

The C3H1-type zinc finger occupies 7–36 (SAKDTFCKNVLIYGYCKYENKGCAFSHTVK). Disordered regions lie at residues 36 to 60 (KPTSSVPGSQGSNATTNSSGNTNAD) and 150 to 186 (SPVMAQSVSTPGAKANGNIQHNPYLPGNAGTPQPTSA). The span at 43-59 (GSQGSNATTNSSGNTNA) shows a compositional bias: low complexity. Residues 59-79 (ADMKKKFNFNTPSFQPSTVPN) carry the PABPC-interacting motif-2 (PAM-2) motif. The span at 150–159 (SPVMAQSVST) shows a compositional bias: polar residues. The tract at residues 252–528 (QTLPRSNLPD…LQEFNRNHLS (277 aa)) is pseudokinase domain. ATP is bound by residues R304, 358-365 (DYFPNSNT), and 415-416 (SK). The stretch at 529–567 (RRILNFCSNAQDSQDFMESQLSTELENARVFRLITKLNF) forms a coiled coil. The tract at residues 568–660 (IIDRPEYDND…DSAFRTLTRG (93 aa)) is knob domain.

This sequence belongs to the protein kinase superfamily. PAN3 family. Homodimer. Forms a heterotrimer with a catalytic subunit PAN2 to form the poly(A)-nuclease (PAN) deadenylation complex. Interacts (via PAM-2 motif) with poly(A)-binding protein PAB1 (via PABC domain), conferring substrate specificity of the enzyme complex.

Its subcellular location is the cytoplasm. Its function is as follows. Regulatory subunit of the poly(A)-nuclease (PAN) deadenylation complex, one of two cytoplasmic mRNA deadenylases involved in mRNA turnover. PAN specifically shortens poly(A) tails of RNA and the activity is stimulated by poly(A)-binding protein PAB1. PAN deadenylation is followed by rapid degradation of the shortened mRNA tails by the CCR4-NOT complex. Deadenylated mRNAs are then degraded by two alternative mechanisms, namely exosome-mediated 3'-5' exonucleolytic degradation, or deadenylation-dependent mRNA decaping and subsequent 5'-3' exonucleolytic degradation by XRN1. May also be involved in post-transcriptional maturation of mRNA poly(A) tails. PAN3 acts as a positive regulator for PAN activity, recruiting the catalytic subunit PAN2 to mRNA via its interaction with RNA and with PAB1. This Debaryomyces hansenii (strain ATCC 36239 / CBS 767 / BCRC 21394 / JCM 1990 / NBRC 0083 / IGC 2968) (Yeast) protein is PAN2-PAN3 deadenylation complex subunit PAN3.